A 137-amino-acid chain; its full sequence is Nucleoside diphosphate kinase (137 aa).

ATP is bound by residues Lys9, Phe57, Arg85, Thr91, Arg102, and Asn112. The Pros-phosphohistidine intermediate role is filled by His115.

Belongs to the NDK family. As to quaternary structure, homotetramer. Requires Mg(2+) as cofactor.

The protein resides in the cytoplasm. It carries out the reaction a 2'-deoxyribonucleoside 5'-diphosphate + ATP = a 2'-deoxyribonucleoside 5'-triphosphate + ADP. The catalysed reaction is a ribonucleoside 5'-diphosphate + ATP = a ribonucleoside 5'-triphosphate + ADP. Functionally, major role in the synthesis of nucleoside triphosphates other than ATP. The ATP gamma phosphate is transferred to the NDP beta phosphate via a ping-pong mechanism, using a phosphorylated active-site intermediate. The polypeptide is Nucleoside diphosphate kinase (Leptospira biflexa serovar Patoc (strain Patoc 1 / ATCC 23582 / Paris)).